We begin with the raw amino-acid sequence, 233 residues long: Transcriptional regulatory protein PrrA (233 aa).

The Response regulatory domain maps to 9-123 (RVLVVDDDSD…ELVARVKALL (115 aa)). At Asp-58 the chain carries 4-aspartylphosphate. Residues 134 to 232 (SETITVGPLE…VRGVGFVLRM (99 aa)) constitute a DNA-binding region (ompR/PhoB-type).

Post-translationally, phosphorylated by PrrB at Asp-58.

The protein resides in the cytoplasm. Functionally, member of the two-component regulatory system PrrB/PrrA that is involved specifically in early intracellular multiplication of Mycobacterium and is essential for its viability. Upon phosphorylation by PrrB, functions as a transcription regulator by direct binding to promoter regions of target genes to positively regulate their expression. Autoregulates its own expression. This chain is Transcriptional regulatory protein PrrA (prrA), found in Mycobacterium bovis (strain ATCC BAA-935 / AF2122/97).